Consider the following 140-residue polypeptide: RxLR effector protein CRE9 (140 aa).

Residues methionine 1 to alanine 24 form the signal peptide. Residues arginine 43 to arginine 61 carry the RxLR-dEER motif. A helical membrane pass occupies residues leucine 119 to leucine 139.

The protein belongs to the RxLR effector family.

Its subcellular location is the secreted. It localises to the host cell. It is found in the membrane. Functionally, effector that is involved in host plant infection. Contributes to virulence during the early infection stage, by inhibiting plant defense responses induced by both PAMP-triggered immunity (PTI) and effector-triggered immunity (ETI). The polypeptide is RxLR effector protein CRE9 (Phytophthora infestans (strain T30-4) (Potato late blight agent)).